The following is a 464-amino-acid chain: MSRTETDSLGTIEVPDDAYWGAQTQRSLENFAIGGQRMPLAVIHALALIKKAAARVNDHLGELPPEVARLIEQAADEVLAGRHDEHFPLVVWQTGSGTQTNMNVNEVIAGRANELAGNPRGGKSPVHPNDHVNRAQSSNDSFPTAMHIAAAKAVHEQLLPAIAELSGGLAEQSARHASLVKTGRTHLMDATPITFGQELSAFVAQLDYAERAIRAALPAVYQLAQGGTAVGTGLNAPKGFADAIAAEIAAESGLPFVAAPNKFAALAGHEPLVILSGALKSLAVALMKIANDLRLLGSGPRAGFAEVKLPANEPGSSIMPGKVNPTQCEALSMLACQVMGNDSTISFAASQGHLQLNVFKPVIVYNLLESIRLLADGCRNFNKHCVAGLEPDAQRMADLLERGLMLVTALNPHIGYDKAAEIAKKAYAEGTTLRAAALQLGYLDEAQFDEWVRPEQMLEAGHHG.

Substrate-binding positions include 96–98 (SGT), 127–130 (HPND), 137–139 (SSN), and Thr-185. His-186 functions as the Proton donor/acceptor in the catalytic mechanism. Ser-316 is a catalytic residue. Substrate is bound by residues Ser-317 and 322–324 (KVN).

This sequence belongs to the class-II fumarase/aspartase family. Fumarase subfamily. As to quaternary structure, homotetramer.

The protein resides in the cytoplasm. The enzyme catalyses (S)-malate = fumarate + H2O. It participates in carbohydrate metabolism; tricarboxylic acid cycle; (S)-malate from fumarate: step 1/1. Functionally, involved in the TCA cycle. Catalyzes the stereospecific interconversion of fumarate to L-malate. The chain is Fumarate hydratase class II 1 from Pseudomonas aeruginosa (strain ATCC 15692 / DSM 22644 / CIP 104116 / JCM 14847 / LMG 12228 / 1C / PRS 101 / PAO1).